An 816-amino-acid chain; its full sequence is MNPLCCIAPVSIDDRTNPVVAKSSNHHLGLEAIPVSKHASKPSFSTQASWISQDQLERLSSEVVDDVNLDGKDASSSSNKGCFFFGNCVGAGAGVAGIMYKWVNYGKGWRARWFELEDGVLSYYKIHGPDKIVMNPSREKGVRVIGEESVRYIRKASCGSSNRLGASAVAASRPCKPFGEIHLKVSSIRASKSDDKRLAIFTGTKTLHLRCVSKENRAAWVEAFQVAKDLFPRVASGDILPSEDAVVSTEKLREKLLQEGVGETVVKDCEAIMLSEVSVLQNRLKVLTHKHIILLDTLRQLETEKIELEATVVDETKEHDSCCGQGRRFSDFYSVMSEVSASDSEADNESQDGADVESDEDDVPYFDTNDILSAEAMRSASYRSREAEGNGSIYDKDPFFSDRLQIPARIPQYPYVRRRDNLPEPKEKEKPVGLWSIIKENIGKDLSGVCLPVYFNEPLSSLQKCFEDLEYSYLIDRALEWGKQGNELMRILNIAAFAVSGYASTEGRQCKPFNPLLGETYEADYPDKGLRFFSEKVSHHPMIVACHCEGQGWNFWGDSNIKGKFWGRSIQLDPVGVLTLKFDDGEIYQWSKVTTSIYNIILGKLYCDHYGTMRIKGGSNYSCRLKFKEQSVIDRNPRQVHGFVQDNRTGEKVAILIGKWDEAMYYVLGDPTTKPKGYDPMTEAVLLWERDKSPTKTRYNLSPFAISLNEITPGMIDKLPPTDSRLRPDQRHLENGEYESANAEKLRLEQLQRQARRLQEKGWKPRWFEKDEEGNYRYLGGYWEAREKKDWDRITDIFKKQQQRNSLSSSSSSTFL.

One can recognise a PH domain in the interval 92 to 229; it reads GAGVAGIMYK…WVEAFQVAKD (138 aa). Residues 290–321 are a coiled coil; the sequence is KHIILLDTLRQLETEKIELEATVVDETKEHDS. Residues 340-362 are disordered; that stretch reads SASDSEADNESQDGADVESDEDD. The span at 344 to 362 shows a compositional bias: acidic residues; sequence SEADNESQDGADVESDEDD. A coiled-coil region spans residues 735 to 764; the sequence is NGEYESANAEKLRLEQLQRQARRLQEKGWK.

Belongs to the OSBP family. As to expression, expressed in roots, leaves, stems and flowers.

May be involved in the transport of sterols. The polypeptide is Oxysterol-binding protein-related protein 1D (ORP1D) (Arabidopsis thaliana (Mouse-ear cress)).